Consider the following 117-residue polypeptide: Mediator of RNA polymerase II transcription subunit 11 (117 aa).

Alanine 2 is subject to N-acetylalanine.

Belongs to the Mediator complex subunit 11 family. Component of the Mediator complex, which is composed of MED1, MED4, MED6, MED7, MED8, MED9, MED10, MED11, MED12, MED13, MED13L, MED14, MED15, MED16, MED17, MED18, MED19, MED20, MED21, MED22, MED23, MED24, MED25, MED26, MED27, MED29, MED30, MED31, CCNC, CDK8 and CDC2L6/CDK11. The MED12, MED13, CCNC and CDK8 subunits form a distinct module termed the CDK8 module. Mediator containing the CDK8 module is less active than Mediator lacking this module in supporting transcriptional activation. Individual preparations of the Mediator complex lacking one or more distinct subunits have been variously termed ARC, CRSP, DRIP, PC2, SMCC and TRAP.

It is found in the nucleus. In terms of biological role, component of the Mediator complex, a coactivator involved in the regulated transcription of nearly all RNA polymerase II-dependent genes. Mediator functions as a bridge to convey information from gene-specific regulatory proteins to the basal RNA polymerase II transcription machinery. Mediator is recruited to promoters by direct interactions with regulatory proteins and serves as a scaffold for theee assembly of a functional pre-initiation complex with RNA polymerase II and the general transcription factors. The chain is Mediator of RNA polymerase II transcription subunit 11 (MED11) from Homo sapiens (Human).